A 253-amino-acid polypeptide reads, in one-letter code: Aminoglycoside nucleotidyltransferase (4') (253 aa).

Homodimer.

The enzyme catalyses kanamycin A + ATP = 4'-adenylylkanamycin A + diphosphate. It carries out the reaction amikacin + ATP = 4'-adenylylamikacin + diphosphate. It catalyses the reaction neomycin B + ATP = 4'-adenylylneomycin B + diphosphate. The catalysed reaction is paromomycin + ATP = 4'-adenylylparomomycin + diphosphate. The enzyme catalyses ribostamycin + ATP = 4'-adenylylribostamycin + diphosphate. It carries out the reaction tobramycin + ATP = 4'-adenylyltobramycin + diphosphate. It catalyses the reaction kanamycin A + CTP = 4'-cytidylylkanamycin A + diphosphate. The catalysed reaction is kanamycin A + GTP = 4'-guanylylkanamycin A + diphosphate. The enzyme catalyses kanamycin A + ITP = 4'-inosinylylkanamycin A + diphosphate. It carries out the reaction dTTP + kanamycin A = 4'-thymidylylkanamycin A + diphosphate. It catalyses the reaction kanamycin A + UTP = 4'-uridylylkanamycin A + diphosphate. The catalysed reaction is kanamycin A + dATP = 4'-(2'-deoxyadenylyl)kanamycin A + diphosphate. The enzyme catalyses kanamycin A + dCTP = 4'-(2'-deoxycytidylyl)kanamycin A + diphosphate. It carries out the reaction kanamycin A + dGTP = 4'-(2'-deoxyguanylyl)kanamycin A + diphosphate. It catalyses the reaction dUTP + kanamycin A = 4'-(2'-deoxyuridylyl)kanamycin A + diphosphate. The catalysed reaction is amikacin + GTP = 4'-guanylylamikacin + diphosphate. The enzyme catalyses amikacin + ITP = 4'-inosinylylamikacin + diphosphate. It carries out the reaction amikacin + CTP = 4'-cytidylylamikacin + diphosphate. It catalyses the reaction amikacin + UTP = 4'-uridylylamikacin + diphosphate. The catalysed reaction is amikacin + dTTP = 4'-thymidylylamikacin + diphosphate. Functionally, inactivates aminoglycoside antibiotics such as kanamycin by catalyzing the transfer of a nucleotidyl group from nucleoside triphosphates such as (d)ATP to the 4'-hydroxyl group of the aminoglycoside. This chain is Aminoglycoside nucleotidyltransferase (4'), found in Bacillus sp.